A 585-amino-acid chain; its full sequence is Ras-specific guanine nucleotide-releasing factor RalGPS1 (585 aa).

The Ras-GEF domain maps to 50-289 (TPEEFASQIT…YKLSLRIEPG (240 aa)). Disordered regions lie at residues 289–342 (GSSS…KSHS) and 378–410 (RSPR…SEEM). Over residues 303 to 312 (AGPSAGSSSA) the composition is skewed to low complexity. The PXXP signature appears at 330-333 (PTPP). Polar residues predominate over residues 385–396 (THTSSTAITNGL). In terms of domain architecture, PH spans 459–571 (VPTMEGPLRR…WHKHLDDACK (113 aa)). Residues 461 to 585 (TMEGPLRRKT…QVPANLMSFE (125 aa)) form a required for stimulation of nucleotide exchange by RALA region.

As to quaternary structure, interacts with the SH3 domains of GRB2, NCK1, PLCG1 and SRC.

Its subcellular location is the cytoplasm. It localises to the cell membrane. Its function is as follows. Guanine nucleotide exchange factor for the small GTPase RALA. May be involved in cytoskeleton organization. This Mus musculus (Mouse) protein is Ras-specific guanine nucleotide-releasing factor RalGPS1 (Ralgps1).